We begin with the raw amino-acid sequence, 975 residues long: E3 ubiquitin-protein ligase BRE1A (975 aa).

Residues 1–37 (MSGIGSKRAAGEPGTSVPPEKKTAVEDSGTTVETIKL) form a disordered region. The residue at position 21 (Lys21) is an N6-acetyllysine. Ser41 is modified (phosphoserine). Positions 43–90 (TEELDIRTLQTKNRKLAEMLDQRQAIEDELREHIEKLERRQATDDASL) form a coiled coil. The disordered stretch occupies residues 125–155 (KALVVPEPEPDSDSNQERKDDRERGEGQEPA). Residues Ser136 and Ser138 each carry the phosphoserine modification. Basic and acidic residues predominate over residues 139–151 (NQERKDDRERGEG). 2 coiled-coil regions span residues 168-375 (EEME…EEVV) and 429-898 (SLHK…TTKK). 2 positions are modified to N6-acetyllysine: Lys348 and Lys510. The tract at residues 507–622 (DLNKTRLRSG…GKHDDGRKKE (116 aa)) is disordered. Ser522 carries the post-translational modification Phosphoserine. Basic and acidic residues predominate over residues 527-540 (EDPKDEPAELKQDS). Residues 543-552 (LATQSAASKA) show a composition bias toward polar residues. A compositionally biased stretch (basic and acidic residues) spans 558–622 (NEIKSKRDEE…GKHDDGRKKE (65 aa)). Ser562 is modified (phosphoserine). Residues 922–961 (CPCCNMRKKDAVLTKCFHVFCFECVKTRYDTRQRKCPKCN) form an RING-type zinc finger.

This sequence belongs to the BRE1 family. In terms of assembly, component of the RNF20/40 complex (also known as BRE1 complex) probably composed of 2 copies of RNF20/BRE1A and 2 copies of RNF40/BRE1B. Interacts with UBE2E1/UBCH6. Interacts with p53/TP53 and WAC. Interacts with PAF1; the interaction mediates the association of the PAF1 and RNF20/40 complexes which is a prerequsite for recruitment of UBE2A/B. Interacts with PA2G4. Interacts with FBXL19.

It localises to the nucleus. It carries out the reaction S-ubiquitinyl-[E2 ubiquitin-conjugating enzyme]-L-cysteine + [acceptor protein]-L-lysine = [E2 ubiquitin-conjugating enzyme]-L-cysteine + N(6)-ubiquitinyl-[acceptor protein]-L-lysine.. It participates in protein modification; protein ubiquitination. Functionally, component of the RNF20/40 E3 ubiquitin-protein ligase complex that mediates monoubiquitination of 'Lys-120' of histone H2B (H2BK120ub1). H2BK120ub1 gives a specific tag for epigenetic transcriptional activation and is also prerequisite for histone H3 'Lys-4' and 'Lys-79' methylation (H3K4me and H3K79me, respectively). It thereby plays a central role in histone code and gene regulation. The RNF20/40 complex forms a H2B ubiquitin ligase complex in cooperation with the E2 enzyme UBE2A or UBE2B; reports about the cooperation with UBE2E1/UBCH are contradictory. Required for transcriptional activation of Hox genes. Recruited to the MDM2 promoter, probably by being recruited by p53/TP53, and thereby acts as a transcriptional coactivator. Mediates the polyubiquitination of PA2G4 leading to its proteasome-mediated degradation. In Bos taurus (Bovine), this protein is E3 ubiquitin-protein ligase BRE1A (RNF20).